Consider the following 175-residue polypeptide: tRNA-acetylating toxin 3 (175 aa).

Leu95, Val97, Gly103, Gly105, Gly107, Ala108, Asp133, Gln138, Asp141, and Trp142 together coordinate acetyl-CoA. The active site involves Tyr143. The acetyl-CoA site is built by Gly145 and Phe146.

This sequence belongs to the acetyltransferase family. GNAT subfamily. Homodimer (in absence of antitoxin); has a condensed and elongated form. Forms a complex with cognate antitoxin TacA3. Forms a 4:2 antitoxin:toxin complex with cognate antitoxin TacA3. Forms a 4:4 antitoxin:toxin complex with promoter DNA, where 2 TacT3 dimers bridge 2 TacA3 dimers. Only TacA3 contacts promoter DNA in the octomeric form. TacT3 may contact DNA in the hexameric form.

It carries out the reaction glycyl-tRNA(Gly) + acetyl-CoA = N-acetylglycyl-tRNA(Gly) + CoA + H(+). In terms of biological role, toxic component of a type II toxin-antitoxin (TA) system. Acetylates tRNA and inhibits translation. Acetylates only Gly-tRNA on all 3 Gly-tRNA(Gly) isoacceptors in situ. In vitro acetylates mainly Ile/Leu and Gly. Overexpression during the lag phase of a tacA3-tacT3 deletion strain leads to a 150-fold increase in persister cells in the presence of cefotaxime and a non-growth state in the absence of antibiotic. Persister cell formation and the growth defect are neutralized by cognate antitoxin TacA3, but not by TacA1 or TacA2. Plays a role in persister cell formation. Its function is as follows. The TacA3-TacT3 complex both represses and derepresses expression of its own operon. The hexameric 4:2 TacA3-TacT3 complex binds promoter DNA and represses its transcription; both subunits are required. The octomeric 4:4 TacA3-TacT3 complex derepresses the operon. The shift from hexameric to octomeric complex probably alters DNA-binding, leading to dissociation from the operator DNA and derepression. The sequence is that of tRNA-acetylating toxin 3 from Salmonella typhimurium (strain 14028s / SGSC 2262).